A 777-amino-acid chain; its full sequence is Semaphorin-3D (777 aa).

An N-terminal signal peptide occupies residues 1–37; sequence MNVTKDENPRSRSQDLHLFHAWMMLIMTVLFLPVTET. Residues 44–531 enclose the Sema domain; the sequence is RLKLTYKDLL…SWDGLVQLSL (488 aa). C117 and C128 are joined by a disulfide. N-linked (GlcNAc...) asparagine glycosylation occurs at N139. 4 disulfides stabilise this stretch: C146/C155, C286/C398, C310/C358, and C534/C552. In terms of domain architecture, PSI spans 533–585; it reads RCDTYGKACADCCLARDPYCAWDGNACSRYAPTSKRRARRQDVKYGDPITQCW. Residues 592–680 form the Ig-like C2-type domain; it reads SHETADEKVI…TFIHTIVKLT (89 aa). N607 and N724 each carry an N-linked (GlcNAc...) asparagine glycan. C665 and C731 are joined by a disulfide. Positions 740–765 are enriched in basic residues; it reads RRQRNKGSPKWKHMQEMKKKRNRRHH. A disordered region spans residues 740-777; the sequence is RRQRNKGSPKWKHMQEMKKKRNRRHHRDLDELQRSVAT. The segment covering 766 to 777 has biased composition (basic and acidic residues); it reads RDLDELQRSVAT.

Belongs to the semaphorin family.

Its subcellular location is the secreted. Its function is as follows. Induces the collapse and paralysis of neuronal growth cones. Could potentially act as repulsive cues toward specific neuronal populations. Binds to neuropilin. The protein is Semaphorin-3D (Sema3d) of Mus musculus (Mouse).